Consider the following 117-residue polypeptide: MTRIKRGYIARRRRTKLRLFASSFRGAHSRLTRTMTQQRIRALVSAHRDRGKRKRDFRRLWITRINAVIHEMGVFYSYNQFIHNLYKKQLLLNRKILAQIALLNRSCLYTISNEIKE.

It belongs to the bacterial ribosomal protein bL20 family.

The protein resides in the plastid. Its subcellular location is the chloroplast. Its function is as follows. Binds directly to 23S ribosomal RNA and is necessary for the in vitro assembly process of the 50S ribosomal subunit. It is not involved in the protein synthesizing functions of that subunit. The sequence is that of Large ribosomal subunit protein bL20c from Barbarea verna (Land cress).